A 292-amino-acid chain; its full sequence is Phosphoribulokinase 2 (292 aa).

Residue 12-20 (GSSGAGTST) coordinates ATP.

This sequence belongs to the phosphoribulokinase family.

It catalyses the reaction D-ribulose 5-phosphate + ATP = D-ribulose 1,5-bisphosphate + ADP + H(+). Its pathway is carbohydrate biosynthesis; Calvin cycle. This chain is Phosphoribulokinase 2 (prkB), found in Cereibacter sphaeroides (Rhodobacter sphaeroides).